The sequence spans 348 residues: uncharacterized protein (348 aa).

NADP(+) is bound by residues K41 and Y170. Phosphoserine is present on S339.

The protein belongs to the NAD(P)-dependent epimerase/dehydratase family. Dihydroflavonol-4-reductase subfamily.

This is an uncharacterized protein from Saccharomyces cerevisiae (strain ATCC 204508 / S288c) (Baker's yeast).